Consider the following 106-residue polypeptide: Nucleoid-associated protein Fjoh_2555 (106 aa).

It belongs to the YbaB/EbfC family. In terms of assembly, homodimer.

It is found in the cytoplasm. Its subcellular location is the nucleoid. Functionally, binds to DNA and alters its conformation. May be involved in regulation of gene expression, nucleoid organization and DNA protection. This chain is Nucleoid-associated protein Fjoh_2555, found in Flavobacterium johnsoniae (strain ATCC 17061 / DSM 2064 / JCM 8514 / BCRC 14874 / CCUG 350202 / NBRC 14942 / NCIMB 11054 / UW101) (Cytophaga johnsonae).